Here is a 142-residue protein sequence, read N- to C-terminus: MKTFSAKAHEVTREWYVIDATDKVLGRVASEVARRLRGKHKPEFTPHVDTGDFIIVINASKLKVTGNKTLDKKYYRHSGYPGGIYETTFGKMQERFPGRALEKAVKGMLPKGPLGYAMIKKLKVYAEATHPHSAQQPKALEI.

Belongs to the universal ribosomal protein uL13 family. In terms of assembly, part of the 50S ribosomal subunit.

Its function is as follows. This protein is one of the early assembly proteins of the 50S ribosomal subunit, although it is not seen to bind rRNA by itself. It is important during the early stages of 50S assembly. This Burkholderia pseudomallei (strain 1106a) protein is Large ribosomal subunit protein uL13.